The following is a 500-amino-acid chain: E3 ubiquitin-protein ligase TRIM4 (500 aa).

Residues 12-53 (CPICLDYFQDPVSIECGHNFCRGCLHRNWAPGGGPFPCPECR) form an RING-type zinc finger. The B box-type zinc-finger motif lies at 82-123 (VPPGLCGRHWEPLRLFCEDDQRPVCLVCRESQEHQTHAMAPI). Zn(2+) is bound by residues C87, H90, C109, and H115. Residues 212–253 (EEEDLFLQRLNKEEEETKKKLNENTLKLNQTIASLKKLILEV) are a coiled coil. Residues 288 to 500 (KVKTVCQIPL…LVIPPVTDRK (213 aa)) form the B30.2/SPRY domain.

This sequence belongs to the TRIM/RBCC family. As to quaternary structure, homotrimer.

The protein localises to the cytoplasm. It carries out the reaction S-ubiquitinyl-[E2 ubiquitin-conjugating enzyme]-L-cysteine + [acceptor protein]-L-lysine = [E2 ubiquitin-conjugating enzyme]-L-cysteine + N(6)-ubiquitinyl-[acceptor protein]-L-lysine.. It functions in the pathway protein modification; protein ubiquitination. In terms of biological role, E3 ubiquitin-protein ligase. Mediates 'Lys-63'-linked polyubiquitination of the innate immune receptor RIGI, this linkage doesn't lead to proteasomal degradation but seems to enhance IFN induction. This chain is E3 ubiquitin-protein ligase TRIM4 (TRIM4), found in Homo sapiens (Human).